The following is a 95-amino-acid chain: MASETVSNHQEKALALLQADAEKILRLIKVQMDHLTMPQCPLYEEVLDTQMFGLSREVDFAVRLGLISEEQGKAMLGELERELSALHEAFTNKQQ.

Belongs to the UPF0358 family.

In Bacillus cereus (strain ATCC 10987 / NRS 248), this protein is UPF0358 protein BCE_3996.